The primary structure comprises 622 residues: Dynein axonemal assembly factor 1 (622 aa).

Positions 1–11 (MHPEVSEQQAD) are enriched in polar residues. Residues 1–80 (MHPEVSEQQA…ARNDRDDRGP (80 aa)) form a disordered region. Residues 32-42 (VRKEEINETKE) are compositionally biased toward basic and acidic residues. Positions 48-59 (STTSCQSQKQQS) are enriched in low complexity. Over residues 62–80 (SRLECRSGYARNDRDDRGP) the composition is skewed to basic and acidic residues. LRR repeat units follow at residues 101-123 (ALND…EEYT), 124-145 (GLRC…QAQS), 146-167 (ELRC…EPLQ), 168-189 (KLDA…SCLP), 190-211 (VLNT…QHLG), and 215-236 (RLCV…SVLE). The LRRCT domain occupies 249-288 (NPVTKHIPNYRRTVTVRLKQLTYLDDRPVFPKDRACAEAW). The segment covering 326 to 336 (EERKKARDKGE) has biased composition (basic and acidic residues). Residues 326–363 (EERKKARDKGETPLPDSEESSSTSPEAQEKPPLGETQE) form a disordered region. Over residues 337 to 351 (TPLPDSEESSSTSPE) the composition is skewed to low complexity. Phosphoserine is present on residues Ser349, Ser464, and Ser487. Disordered regions lie at residues 481–505 (SSLS…TPTG) and 535–622 (TATT…FGLD). 2 stretches are compositionally biased toward polar residues: residues 535–552 (TATT…TTRP) and 568–578 (EPNQSLPAQSS).

The protein belongs to the DNAAF1 family.

It localises to the cell projection. It is found in the cilium. Functionally, cilium-specific protein required for the stability of the ciliary architecture. Plays a role in cytoplasmic preassembly of dynein arms. Involved in regulation of microtubule-based cilia and actin-based brush border microvilli. This Peromyscus californicus (California mouse) protein is Dynein axonemal assembly factor 1 (Dnaaf1).